The following is a 1073-amino-acid chain: DNA-directed RNA polymerase subunit beta (1073 aa).

It belongs to the RNA polymerase beta chain family. As to quaternary structure, in plastids the minimal PEP RNA polymerase catalytic core is composed of four subunits: alpha, beta, beta', and beta''. When a (nuclear-encoded) sigma factor is associated with the core the holoenzyme is formed, which can initiate transcription.

The protein resides in the plastid. The protein localises to the chloroplast. It carries out the reaction RNA(n) + a ribonucleoside 5'-triphosphate = RNA(n+1) + diphosphate. Functionally, DNA-dependent RNA polymerase catalyzes the transcription of DNA into RNA using the four ribonucleoside triphosphates as substrates. This Aethionema grandiflorum (Persian stone-cress) protein is DNA-directed RNA polymerase subunit beta.